The following is a 368-amino-acid chain: tRNA/tmRNA (uracil-C(5))-methyltransferase (368 aa).

S-adenosyl-L-methionine contacts are provided by Gln192, Tyr220, Asn225, Glu241, and Asp301. The Nucleophile role is filled by Cys326. Residue Glu360 is the Proton acceptor of the active site.

The protein belongs to the class I-like SAM-binding methyltransferase superfamily. RNA M5U methyltransferase family. TrmA subfamily.

The catalysed reaction is uridine(54) in tRNA + S-adenosyl-L-methionine = 5-methyluridine(54) in tRNA + S-adenosyl-L-homocysteine + H(+). The enzyme catalyses uridine(341) in tmRNA + S-adenosyl-L-methionine = 5-methyluridine(341) in tmRNA + S-adenosyl-L-homocysteine + H(+). Functionally, dual-specificity methyltransferase that catalyzes the formation of 5-methyluridine at position 54 (m5U54) in all tRNAs, and that of position 341 (m5U341) in tmRNA (transfer-mRNA). In Actinobacillus pleuropneumoniae serotype 7 (strain AP76), this protein is tRNA/tmRNA (uracil-C(5))-methyltransferase.